The sequence spans 374 residues: Queuine tRNA-ribosyltransferase (374 aa).

Aspartate 89 functions as the Proton acceptor in the catalytic mechanism. Substrate contacts are provided by residues 89–93 (DSGGF), aspartate 143, glutamine 187, and glycine 214. Residues 245–251 (GVGKPED) form an RNA binding region. Aspartate 264 serves as the catalytic Nucleophile. The RNA binding; important for wobble base 34 recognition stretch occupies residues 269–273 (TRNAR). Cysteine 302, cysteine 304, cysteine 307, and histidine 333 together coordinate Zn(2+).

It belongs to the queuine tRNA-ribosyltransferase family. In terms of assembly, homodimer. Within each dimer, one monomer is responsible for RNA recognition and catalysis, while the other monomer binds to the replacement base PreQ1. It depends on Zn(2+) as a cofactor.

The enzyme catalyses 7-aminomethyl-7-carbaguanine + guanosine(34) in tRNA = 7-aminomethyl-7-carbaguanosine(34) in tRNA + guanine. It participates in tRNA modification; tRNA-queuosine biosynthesis. In terms of biological role, catalyzes the base-exchange of a guanine (G) residue with the queuine precursor 7-aminomethyl-7-deazaguanine (PreQ1) at position 34 (anticodon wobble position) in tRNAs with GU(N) anticodons (tRNA-Asp, -Asn, -His and -Tyr). Catalysis occurs through a double-displacement mechanism. The nucleophile active site attacks the C1' of nucleotide 34 to detach the guanine base from the RNA, forming a covalent enzyme-RNA intermediate. The proton acceptor active site deprotonates the incoming PreQ1, allowing a nucleophilic attack on the C1' of the ribose to form the product. After dissociation, two additional enzymatic reactions on the tRNA convert PreQ1 to queuine (Q), resulting in the hypermodified nucleoside queuosine (7-(((4,5-cis-dihydroxy-2-cyclopenten-1-yl)amino)methyl)-7-deazaguanosine). The sequence is that of Queuine tRNA-ribosyltransferase from Shewanella baltica (strain OS223).